The chain runs to 223 residues: Endonuclease NucS (223 aa).

The protein belongs to the NucS endonuclease family.

The protein resides in the cytoplasm. Cleaves both 3' and 5' ssDNA extremities of branched DNA structures. This chain is Endonuclease NucS, found in Streptomyces avermitilis (strain ATCC 31267 / DSM 46492 / JCM 5070 / NBRC 14893 / NCIMB 12804 / NRRL 8165 / MA-4680).